Here is a 388-residue protein sequence, read N- to C-terminus: Mannitol-1-phosphate 5-dehydrogenase (388 aa).

4-15 (AVHFGAGNIGRG) provides a ligand contact to NAD(+).

It belongs to the mannitol dehydrogenase family.

The enzyme catalyses D-mannitol 1-phosphate + NAD(+) = beta-D-fructose 6-phosphate + NADH + H(+). The chain is Mannitol-1-phosphate 5-dehydrogenase from Thermoanaerobacter pseudethanolicus (strain ATCC 33223 / 39E) (Clostridium thermohydrosulfuricum).